Here is a 212-residue protein sequence, read N- to C-terminus: ATP-dependent dethiobiotin synthetase BioD (212 aa).

Residue 13 to 18 coordinates ATP; the sequence is GIGKTV. Threonine 17 contacts Mg(2+). Lysine 33 is a catalytic residue. Position 37 (serine 37) interacts with substrate. Glutamate 100 contributes to the Mg(2+) binding site. Residues 100–103 and 184–186 contribute to the ATP site; these read EGAG and PRL.

This sequence belongs to the dethiobiotin synthetase family. Homodimer. The cofactor is Mg(2+).

The protein localises to the cytoplasm. The catalysed reaction is (7R,8S)-7,8-diammoniononanoate + CO2 + ATP = (4R,5S)-dethiobiotin + ADP + phosphate + 3 H(+). Its pathway is cofactor biosynthesis; biotin biosynthesis; biotin from 7,8-diaminononanoate: step 1/2. In terms of biological role, catalyzes a mechanistically unusual reaction, the ATP-dependent insertion of CO2 between the N7 and N8 nitrogen atoms of 7,8-diaminopelargonic acid (DAPA, also called 7,8-diammoniononanoate) to form a ureido ring. This Agrobacterium fabrum (strain C58 / ATCC 33970) (Agrobacterium tumefaciens (strain C58)) protein is ATP-dependent dethiobiotin synthetase BioD.